A 1058-amino-acid polypeptide reads, in one-letter code: Protein translocase subunit SECA2, chloroplastic (1058 aa).

A chloroplast-targeting transit peptide spans 1-58; that stretch reads MGSVSNLVSPNICHPAPPCLTSRSNKFPWTKPISGLLFYRSVTPIKRCHLVRRSCVVS. An ATP-binding site is contributed by 167-174; sequence MKTGEGKT.

Belongs to the SecA family. As to quaternary structure, part of a second Sec protein translocation apparatus. Interacts probably with SCY2.

The protein localises to the plastid. Its subcellular location is the chloroplast membrane. It carries out the reaction ATP + H2O + chloroplast-proteinSide 1 = ADP + phosphate + chloroplast-proteinSide 2.. Involved in protein export. Probably interacts with other proteins to allow the postimport or conservative sorting pathway for inner membrane proteins in plastids. May have a central role in coupling the hydrolysis of ATP to the transfer of proteins across the membrane. In Arabidopsis thaliana (Mouse-ear cress), this protein is Protein translocase subunit SECA2, chloroplastic.